The primary structure comprises 84 residues: MVLQNDIDLLHPPPELEKRKHKLKRLVQSPNSFFMDVKCQGCFNITTVFSHSQTVVVCGNCQTVLCQPTGGKARLQEGCSFRKK.

The C4-type zinc finger occupies 39–61 (CQGCFNITTVFSHSQTVVVCGNC).

This sequence belongs to the eukaryotic ribosomal protein eS27 family. It depends on Zn(2+) as a cofactor.

In Arabidopsis thaliana (Mouse-ear cress), this protein is Small ribosomal subunit protein eS27w (RPS27D).